The primary structure comprises 200 residues: High mobility group protein B3 (200 aa).

Lysine 3 carries the post-translational modification N6-acetyllysine. 2 DNA-binding regions (HMG box) span residues 9–79 (PKGK…KDYG) and 93–161 (PKRP…ADYK). Cysteine sulfonic acid (-SO3H); alternate is present on cysteine 23. Cysteine 23 and cysteine 45 form a disulfide bridge. Residues lysine 30 and lysine 43 each carry the N6-acetyllysine modification. A Cysteine sulfonic acid (-SO3H); alternate modification is found at cysteine 45. Positions 71–97 (YDREMKDYGPAKGGKKKKDPNAPKRPP) are disordered. Serine 98 carries the post-translational modification Phosphoserine. The residue at position 104 (cysteine 104) is a Cysteine sulfonic acid (-SO3H). An N6-acetyllysine mark is found at lysine 112 and lysine 139. Residues 161–200 (KSKGKFDGAKGPAKVARKKVEEEEEEEEEEEEEEEEEEDE) form a disordered region. The span at 182-200 (EEEEEEEEEEEEEEEEEDE) shows a compositional bias: acidic residues.

It belongs to the HMGB family. Post-translationally, reduction/oxidation of cysteine residues Cys-23, Cys-45 and Cys-104 and a possible intramolecular disulfide bond involving Cys-23 and Cys-45 give rise to different redox forms with specific functional activities in various cellular compartments: 1- fully reduced HMGB3 (HMGB3C23hC45hC104h), 2- disulfide HMGB3 (HMGB3C23-C45C104h) and 3- sulfonyl HMGB3 (HMGB3C23soC45soC104so). As to expression, expressed in bone marrow cells, specifically in primitive Lin-, c-kit+, Sca-1+, IL-7Ralpha- cells, and Ter119+ erythroid cells.

The protein localises to the nucleus. It is found in the chromosome. It localises to the cytoplasm. In terms of biological role, multifunctional protein with various roles in different cellular compartments. May act in a redox sensitive manner. Associates with chromatin and binds DNA with a preference for non-canonical DNA structures such as single-stranded DNA. Can bend DNA and enhance DNA flexibility by looping thus providing a mechanism to promote activities on various gene promoters. Proposed to be involved in the innate immune response to nucleic acids by acting as a cytoplasmic promiscuous immunogenic DNA/RNA sensor. Negatively regulates B-cell and myeloid cell differentiation. In hematopoietic stem cells may regulate the balance between self-renewal and differentiation. Involved in negative regulation of canonical Wnt signaling. This chain is High mobility group protein B3 (Hmgb3), found in Mus musculus (Mouse).